The sequence spans 382 residues: MKNAVHFGAGNIGRGFIGKLLADAEVEVTFADVDAPLVDQLSHKQEYKVKVVGTECQIDTVTHVTAVNSASEDVIDRIVKTDLVTTAVGPNVLDIIAKTIATGIAKRFAAGNDKPLNIIACENMVRGTTHLKGEVYKHLDESLHSKADELVGFVDSAVDRIVPPAEAANDDPLEVTVESFSEWIVDEQQFKGEIPDIAGMEKTNNLMAFVERKLFTLNTGHCITAYLGCLKGHRTIREAIEDPSIHAEVKQAMQESGEVLIKRYGFDRDMHNAYIEKILGRFANPYLVDEVDRVGRQPIRKLGANDRLVKPLLGTIEYGTENKTLLKGIAAALKYTNDTDPQAVEQQNSLKEVGVKKTLATYTGLAENSAEVTQIETLYNQL.

NAD(+) is bound at residue 4-15 (AVHFGAGNIGRG).

The protein belongs to the mannitol dehydrogenase family.

The catalysed reaction is D-mannitol 1-phosphate + NAD(+) = beta-D-fructose 6-phosphate + NADH + H(+). The sequence is that of Mannitol-1-phosphate 5-dehydrogenase from Vibrio campbellii (strain ATCC BAA-1116).